Consider the following 268-residue polypeptide: Tryptophan synthase alpha chain (268 aa).

Active-site proton acceptor residues include Glu49 and Asp60.

Belongs to the TrpA family. As to quaternary structure, tetramer of two alpha and two beta chains.

It carries out the reaction (1S,2R)-1-C-(indol-3-yl)glycerol 3-phosphate + L-serine = D-glyceraldehyde 3-phosphate + L-tryptophan + H2O. It participates in amino-acid biosynthesis; L-tryptophan biosynthesis; L-tryptophan from chorismate: step 5/5. In terms of biological role, the alpha subunit is responsible for the aldol cleavage of indoleglycerol phosphate to indole and glyceraldehyde 3-phosphate. The polypeptide is Tryptophan synthase alpha chain (Aliivibrio fischeri (strain ATCC 700601 / ES114) (Vibrio fischeri)).